The primary structure comprises 269 residues: Formamidopyrimidine-DNA glycosylase (269 aa).

Pro2 serves as the catalytic Schiff-base intermediate with DNA. Glu3 (proton donor) is an active-site residue. Catalysis depends on Lys57, which acts as the Proton donor; for beta-elimination activity. DNA is bound by residues His90, Arg109, and Lys150. The FPG-type zinc finger occupies 235 to 269 (RVYGRNGEPCRTCGTPIETAKHGQRSTFFCRRCQV). Arg259 functions as the Proton donor; for delta-elimination activity in the catalytic mechanism.

Belongs to the FPG family. Monomer. Zn(2+) is required as a cofactor.

The enzyme catalyses Hydrolysis of DNA containing ring-opened 7-methylguanine residues, releasing 2,6-diamino-4-hydroxy-5-(N-methyl)formamidopyrimidine.. It catalyses the reaction 2'-deoxyribonucleotide-(2'-deoxyribose 5'-phosphate)-2'-deoxyribonucleotide-DNA = a 3'-end 2'-deoxyribonucleotide-(2,3-dehydro-2,3-deoxyribose 5'-phosphate)-DNA + a 5'-end 5'-phospho-2'-deoxyribonucleoside-DNA + H(+). Its function is as follows. Involved in base excision repair of DNA damaged by oxidation or by mutagenic agents. Acts as a DNA glycosylase that recognizes and removes damaged bases. Has a preference for oxidized purines, such as 7,8-dihydro-8-oxoguanine (8-oxoG). Has AP (apurinic/apyrimidinic) lyase activity and introduces nicks in the DNA strand. Cleaves the DNA backbone by beta-delta elimination to generate a single-strand break at the site of the removed base with both 3'- and 5'-phosphates. This is Formamidopyrimidine-DNA glycosylase from Pectobacterium atrosepticum (strain SCRI 1043 / ATCC BAA-672) (Erwinia carotovora subsp. atroseptica).